A 134-amino-acid polypeptide reads, in one-letter code: Small ribosomal subunit protein uS11 (134 aa).

Disordered stretches follow at residues 1–22 (MPPK…KNVA) and 114–134 (SIQD…RRRV). The span at 9–22 (AAKKVRRKEKKNVA) shows a compositional bias: basic residues.

The protein belongs to the universal ribosomal protein uS11 family. As to quaternary structure, part of the 30S ribosomal subunit. Interacts with proteins S7 and S18. Binds to IF-3.

Functionally, located on the platform of the 30S subunit, it bridges several disparate RNA helices of the 16S rRNA. Forms part of the Shine-Dalgarno cleft in the 70S ribosome. This is Small ribosomal subunit protein uS11 from Streptomyces coelicolor (strain ATCC BAA-471 / A3(2) / M145).